The chain runs to 671 residues: DNA ligase (671 aa).

NAD(+) is bound by residues 32-36, 81-82, and glutamate 113; these read DAEYD and SL. The active-site N6-AMP-lysine intermediate is the lysine 115. NAD(+)-binding residues include arginine 136, glutamate 173, lysine 290, and lysine 314. Residues cysteine 408, cysteine 411, cysteine 426, and cysteine 432 each coordinate Zn(2+). The BRCT domain occupies 593–671; the sequence is EIDSPFAGKT…ETEMLRLLGS (79 aa).

Belongs to the NAD-dependent DNA ligase family. LigA subfamily. It depends on Mg(2+) as a cofactor. Mn(2+) serves as cofactor.

The catalysed reaction is NAD(+) + (deoxyribonucleotide)n-3'-hydroxyl + 5'-phospho-(deoxyribonucleotide)m = (deoxyribonucleotide)n+m + AMP + beta-nicotinamide D-nucleotide.. DNA ligase that catalyzes the formation of phosphodiester linkages between 5'-phosphoryl and 3'-hydroxyl groups in double-stranded DNA using NAD as a coenzyme and as the energy source for the reaction. It is essential for DNA replication and repair of damaged DNA. The chain is DNA ligase from Escherichia coli O127:H6 (strain E2348/69 / EPEC).